Reading from the N-terminus, the 635-residue chain is Threonine--tRNA ligase (635 aa).

Positions 1 to 61 (MITVRLPDGS…EQDSDLSIIT (61 aa)) constitute a TGS domain. The interval 242 to 533 (DHRKLGRALD…LIENHAGALP (292 aa)) is catalytic. Zn(2+) is bound by residues cysteine 333, histidine 384, and histidine 510.

The protein belongs to the class-II aminoacyl-tRNA synthetase family. As to quaternary structure, homodimer. Requires Zn(2+) as cofactor.

The protein localises to the cytoplasm. It carries out the reaction tRNA(Thr) + L-threonine + ATP = L-threonyl-tRNA(Thr) + AMP + diphosphate + H(+). In terms of biological role, catalyzes the attachment of threonine to tRNA(Thr) in a two-step reaction: L-threonine is first activated by ATP to form Thr-AMP and then transferred to the acceptor end of tRNA(Thr). Also edits incorrectly charged L-seryl-tRNA(Thr). The protein is Threonine--tRNA ligase of Herminiimonas arsenicoxydans.